We begin with the raw amino-acid sequence, 275 residues long: Large ribosomal subunit protein uL2 (275 aa).

The disordered stretch occupies residues 224–257 (AMNPIDHPHGGGEGRTAAGRDPVSPWGTPTKGFR).

This sequence belongs to the universal ribosomal protein uL2 family. In terms of assembly, part of the 50S ribosomal subunit. Forms a bridge to the 30S subunit in the 70S ribosome.

In terms of biological role, one of the primary rRNA binding proteins. Required for association of the 30S and 50S subunits to form the 70S ribosome, for tRNA binding and peptide bond formation. It has been suggested to have peptidyltransferase activity; this is somewhat controversial. Makes several contacts with the 16S rRNA in the 70S ribosome. The polypeptide is Large ribosomal subunit protein uL2 (Burkholderia mallei (strain NCTC 10247)).